The following is a 123-amino-acid chain: Small ribosomal subunit protein uS13 (123 aa).

The interval 95 to 123 is disordered; sequence GLPVRGQRTKTNARTRKGPIKTVGAKRKK.

This sequence belongs to the universal ribosomal protein uS13 family. As to quaternary structure, part of the 30S ribosomal subunit. Forms a loose heterodimer with protein S19. Forms two bridges to the 50S subunit in the 70S ribosome.

Functionally, located at the top of the head of the 30S subunit, it contacts several helices of the 16S rRNA. In the 70S ribosome it contacts the 23S rRNA (bridge B1a) and protein L5 of the 50S subunit (bridge B1b), connecting the 2 subunits; these bridges are implicated in subunit movement. Contacts the tRNAs in the A and P-sites. The polypeptide is Small ribosomal subunit protein uS13 (Desulfitobacterium hafniense (strain DSM 10664 / DCB-2)).